The primary structure comprises 90 residues: DNA-directed RNA polymerase subunit Rpo11 (90 aa).

Belongs to the archaeal Rpo11/eukaryotic RPB11/RPC19 RNA polymerase subunit family. In terms of assembly, part of the 13-subunit RNA polymerase complex.

The protein localises to the cytoplasm. The catalysed reaction is RNA(n) + a ribonucleoside 5'-triphosphate = RNA(n+1) + diphosphate. Its function is as follows. DNA-dependent RNA polymerase (RNAP) catalyzes the transcription of DNA into RNA using the four ribonucleoside triphosphates as substrates. This Sulfolobus acidocaldarius (strain ATCC 33909 / DSM 639 / JCM 8929 / NBRC 15157 / NCIMB 11770) protein is DNA-directed RNA polymerase subunit Rpo11.